Consider the following 241-residue polypeptide: Small ribosomal subunit protein eS4 (241 aa).

The S4 RNA-binding domain maps to 37–99 (IPLGLLLRDY…ADLYLRIVPD (63 aa)).

The protein belongs to the eukaryotic ribosomal protein eS4 family.

The chain is Small ribosomal subunit protein eS4 from Metallosphaera sedula (strain ATCC 51363 / DSM 5348 / JCM 9185 / NBRC 15509 / TH2).